The following is a 309-amino-acid chain: THAP domain-containing protein 7 (309 aa).

A THAP-type zinc finger spans residues 1–93; sequence MPRHCSAAGC…LKEGAVPTIF (93 aa). Serine 162 carries the post-translational modification Phosphoserine. A disordered region spans residues 176–210; it reads SDLLGPLGAQADEAGCSTQPSPEQHPSPLEPQPAS. Residues 198–209 are compositionally biased toward pro residues; that stretch reads EQHPSPLEPQPA. Serine 210 carries the phosphoserine modification. Residues 229–232 carry the HCFC1-binding motif (HBM) motif; sequence EHSY.

In terms of assembly, forms homodimers. Interacts with HDAC3 and nuclear hormone receptor corepressors. Interacts via HBM with HCFC1.

It localises to the nucleus. The protein localises to the chromosome. In terms of biological role, chromatin-associated, histone tail-binding protein that represses transcription via recruitment of HDAC3 and nuclear hormone receptor corepressors. This is THAP domain-containing protein 7 (Thap7) from Mus musculus (Mouse).